The primary structure comprises 381 residues: Ecotin-like protein 3 (381 aa).

The segment at 232 to 381 is disordered; it reads EHLEVCPKNN…GSKADPVDGK (150 aa). A compositionally biased stretch (polar residues) spans 273–292; the sequence is NESSPSRPRLSSTAYWPQEN. Positions 336–347 are enriched in basic and acidic residues; that stretch reads RKAEDDVYEKTM. Over residues 363–372 the composition is skewed to polar residues; it reads SASSTKSGNG.

It belongs to the protease inhibitor I11 (ecotin) family.

This is Ecotin-like protein 3 from Leishmania major.